A 132-amino-acid polypeptide reads, in one-letter code: Galectin-2 (132 aa).

The 128-residue stretch at 4-131 (ELEVKNMDMK…GFNMSSFKLK (128 aa)) folds into the Galectin domain. Position 65–71 (65–71 (WGQEQRE)) interacts with a beta-D-galactoside.

As to quaternary structure, homodimer.

This protein binds beta-galactoside. Its physiological function is not yet known. The sequence is that of Galectin-2 (LGALS2) from Homo sapiens (Human).